The chain runs to 1277 residues: MGAHHPALGLLLLLLCPAQVFSQSCVWYGECGIATGDKRYNCKYSGPPKPLPKDGYDLVQELCPGLFFDNVSLCCDIQQLQTLKSNLQLPLQFLSRCPSCFYNLMTLFCELTCSPHQSQFLNVTATEDYFDPKTQENKTNVKELEYFVGQSFANAMYNACRDVEAPSSNEKALGLLCGRDARACNATNWIEYMFNKDNGQAPFTIIPVFSDLSILGMEPMRNATKGCNESVDEVTGPCSCQDCSIVCGPKPQPPPPPMPWRIWGLDAMYVIMWVTYVAFLFVFFGALLAVWCHRRRYFVSEYTPIDSNIAFSVNSSDKGEASCCDPLGAAFDDCLRRMFTKWGAFCVRNPTCIIFFSLAFITVCSSGLVFVQVTTNPVELWSAPHSQARLEKEYFDKHFGPFFRTEQLIIQAPNTSVHIYEPYPAGADVPFGPPLNKEILHQVLDLQIAIESITASYNNETVTLQDICVAPLSPYNKNCTIMSVLNYFQNSHAVLDSQVGDDFYIYADYHTHFLYCVRAPASLNDTSLLHGPCLGTFGGPVFPWLVLGGYDDQNYNNATALVITFPVNNYYNDTERLQRAWAWEKEFISFVKNYKNPNLTISFTAERSIEDELNRESNSDVFTVIISYVVMFLYISLALGHIQSCSRLLVDSKISLGIAGILIVLSSVACSLGIFSYMGMPLTLIVIEVIPFLVLAVGVDNIFILVQTYQRDERLQEETLDQQLGRILGEVAPTMFLSSFSETSAFFFGALSSMPAVHTFSLFAGMAVLIDFLLQITCFVSLLGLDIKRQEKNHLDILCCVRGADDGQGSHASESYLFRFFKNYFAPLLLKDWLRPIVVAVFVGVLSFSVAVVNKVDIGLDQSLSMPNDSYVIDYFKSLAQYLHSGPPVYFVLEEGYNYSSRKGQNMVCGGMGCDNDSLVQQIFNAAELDTYTRVGFAPSSWIDDYFDWVSPQSSCCRLYNVTHQFCNASVMDPTCVRCRPLTPEGKQRPQGKEFMKFLPMFLSDNPNPKCGKGGHAAYGSAVNIVGDDTYIGATYFMTYHTILKTSADYTDAMKKARLIASNITETMRSKGSDYRVFPYSVFYVFYEQYLTIIDDTIFNLSVSLGSIFLVTLVVLGCELWSAVIMCITIAMILVNMFGVMWLWGISLNAVSLVNLVMSCGISVEFCSHITRAFTMSTKGSRVSRAEEALAHMGSSVFSGITLTKFGGIVVLAFAKSQIFEIFYFRMYLAMVLLGATHGLIFLPVLLSYIGPSVNKAKRHTTYERYRGTERERLLNF.

The N-terminal stretch at 1-22 (MGAHHPALGLLLLLLCPAQVFS) is a signal peptide. Topologically, residues 23 to 269 (QSCVWYGECG…WRIWGLDAMY (247 aa)) are lumenal. 9 disulfides stabilise this stretch: Cys25–Cys74, Cys31–Cys42, Cys63–Cys109, Cys75–Cys113, Cys97–Cys238, Cys100–Cys160, Cys177–Cys184, Cys227–Cys243, and Cys240–Cys247. Asn41 is a binding site for cholesterol. An N-linked (GlcNAc...) asparagine glycan is attached at Asn70. Gln79 is a cholesterol binding site. N-linked (GlcNAc...) asparagine glycans are attached at residues Asn122 and Asn137. An important for cholesterol binding and cholesterol transfer from NPC1 to liposomes region spans residues 175–205 (LLCGRDARACNATNWIEYMFNKDNGQAPFTI). Asn185, Asn222, and Asn228 each carry an N-linked (GlcNAc...) asparagine glycan. The chain crosses the membrane as a helical span at residues 270–290 (VIMWVTYVAFLFVFFGALLAV). Over 291 to 350 (WCHRRRYFVSEYTPIDSNIAFSVNSSDKGEASCCDPLGAAFDDCLRRMFTKWGAFCVRNP) the chain is Cytoplasmic. The helical transmembrane segment at 351–371 (TCIIFFSLAFITVCSSGLVFV) threads the bilayer. Residues 372–621 (QVTTNPVELW…ELNRESNSDV (250 aa)) are Lumenal-facing. N-linked (GlcNAc...) asparagine glycans are attached at residues Asn414, Asn459, Asn478, and Asn524. 2 disulfides stabilise this stretch: Cys468/Cys479 and Cys516/Cys533. Residues 620–785 (DVFTVIISYV…ITCFVSLLGL (166 aa)) form the SSD domain. A helical transmembrane segment spans residues 622 to 642 (FTVIISYVVMFLYISLALGHI). Over 643–653 (QSCSRLLVDSK) the chain is Cytoplasmic. Residues 654–674 (ISLGIAGILIVLSSVACSLGI) traverse the membrane as a helical segment. Residues 675–683 (FSYMGMPLT) are Lumenal-facing. A helical transmembrane segment spans residues 684-704 (LIVIEVIPFLVLAVGVDNIFI). Over 705–730 (LVQTYQRDERLQEETLDQQLGRILGE) the chain is Cytoplasmic. A helical membrane pass occupies residues 731-751 (VAPTMFLSSFSETSAFFFGAL). Topologically, residues 752–759 (SSMPAVHT) are lumenal. The chain crosses the membrane as a helical span at residues 760-780 (FSLFAGMAVLIDFLLQITCFV). The Cytoplasmic portion of the chain corresponds to 781-832 (SLLGLDIKRQEKNHLDILCCVRGADDGQGSHASESYLFRFFKNYFAPLLLKD). The helical transmembrane segment at 833-853 (WLRPIVVAVFVGVLSFSVAVV) threads the bilayer. Residues 854–1097 (NKVDIGLDQS…EQYLTIIDDT (244 aa)) lie on the Lumenal side of the membrane. N-linked (GlcNAc...) asparagine glycans are attached at residues Asn868 and Asn898. A disulfide bond links Cys909 and Cys914. Asn916, Asn961, Asn968, and Asn1063 each carry an N-linked (GlcNAc...) asparagine glycan. 3 disulfides stabilise this stretch: Cys956/Cys1011, Cys957/Cys979, and Cys967/Cys976. A helical membrane pass occupies residues 1098–1118 (IFNLSVSLGSIFLVTLVVLGC). Over 1119–1123 (ELWSA) the chain is Cytoplasmic. Residues 1124 to 1144 (VIMCITIAMILVNMFGVMWLW) traverse the membrane as a helical segment. Residue Gly1145 is a topological domain, lumenal. Residues 1146 to 1166 (ISLNAVSLVNLVMSCGISVEF) traverse the membrane as a helical segment. The Cytoplasmic segment spans residues 1167-1194 (CSHITRAFTMSTKGSRVSRAEEALAHMG). The chain crosses the membrane as a helical span at residues 1195-1215 (SSVFSGITLTKFGGIVVLAFA). Over 1216 to 1226 (KSQIFEIFYFR) the chain is Lumenal. The chain crosses the membrane as a helical span at residues 1227 to 1247 (MYLAMVLLGATHGLIFLPVLL). The Cytoplasmic segment spans residues 1248–1277 (SYIGPSVNKAKRHTTYERYRGTERERLLNF). The tract at residues 1274-1277 (LLNF) is required for location in lysosomes. Residues 1274–1277 (LLNF) carry the Di-leucine motif motif.

The protein belongs to the patched family. Interacts (via the second lumenal domain) with NPC2. Interacts with TMEM97; the interaction may decrease NPC1 availability to the cell. Interacts with TIM1. Interacts with SLC38A9; this interaction inhibits cholesterol-mediated mTORC1 activation via its sterol transport activity. In terms of processing, N-glycosylated. In terms of tissue distribution, detected in liver (at protein level). Ubiquitous. Detected in adult heart, spleen, lung, liver, skeletal muscle, kidney, testis.

The protein localises to the late endosome membrane. It is found in the lysosome membrane. The enzyme catalyses cholesterol(in) = cholesterol(out). Its function is as follows. Intracellular cholesterol transporter which acts in concert with NPC2 and plays an important role in the egress of cholesterol from the endosomal/lysosomal compartment. Unesterified cholesterol that has been released from LDLs in the lumen of the late endosomes/lysosomes is transferred by NPC2 to the cholesterol-binding pocket in the N-terminal domain of NPC1. Cholesterol binds to NPC1 with the hydroxyl group buried in the binding pocket. May play a role in vesicular trafficking in glia, a process that may be crucial for maintaining the structural and functional integrity of nerve terminals. Inhibits cholesterol-mediated mTORC1 activation throught its interaction with SLC38A9. This chain is NPC intracellular cholesterol transporter 1, found in Mus musculus (Mouse).